The chain runs to 519 residues: MIPDVSQALSWLEAHPDALNGIGRGIERETLRVRPDGYLATTAHPTSLGAALTHKWITTDFAEALLEFITPVDRDIDRLLAFLRDIHRHTARELGEERMWPMSMPCRVERDGDIELAQYGSSNIGQMKTLYRQGLKNRYGALMQVISGVHYNFSLPLSFWQAWAGVNDAESGKEAISAGYLRLIRNYYRFGWVIPYLFGASPAICSSFLQGKESKLPFEHGDNGMLSLPYATSLRLSDLGYTNKSQSSLGIAFNNLPDYISGLKAAIKTPSEEFAAMGVKDKNGDWLQLNTNVLQIENELYAPIRPKRVTRSGEAPSDALQRGGIEYIEVRSLDINPFSPIGVDADQVRFLDLFLIWCALADAPDMDSAELACTRKNWNRVILEGRKPGQTIGIGCGKTERPLVDVGKALFRDLLRVAKTLDSQGGECQYQEVCERLAASFDDPDLTYSARFLRTLQDNGIEKTGMALAEQYRAQLREEPLQVLTEQRFHDEAQRSRQSQSEIEESDTLSLEAFLQGKS.

It belongs to the glutamate--cysteine ligase type 1 family. Type 1 subfamily.

The enzyme catalyses L-cysteine + L-glutamate + ATP = gamma-L-glutamyl-L-cysteine + ADP + phosphate + H(+). Its pathway is sulfur metabolism; glutathione biosynthesis; glutathione from L-cysteine and L-glutamate: step 1/2. This is Glutamate--cysteine ligase from Erwinia tasmaniensis (strain DSM 17950 / CFBP 7177 / CIP 109463 / NCPPB 4357 / Et1/99).